The following is a 208-amino-acid chain: GTP cyclohydrolase 1 (208 aa).

Zn(2+)-binding residues include Cys-89, His-92, and Cys-163.

Belongs to the GTP cyclohydrolase I family. In terms of assembly, homomer.

The catalysed reaction is GTP + H2O = 7,8-dihydroneopterin 3'-triphosphate + formate + H(+). The protein operates within cofactor biosynthesis; 7,8-dihydroneopterin triphosphate biosynthesis; 7,8-dihydroneopterin triphosphate from GTP: step 1/1. This Saccharolobus islandicus (strain L.S.2.15 / Lassen #1) (Sulfolobus islandicus) protein is GTP cyclohydrolase 1.